The chain runs to 579 residues: DNA ligase 1 (579 aa).

Residue E244 coordinates ATP. K246 serves as the catalytic N6-AMP-lysine intermediate. 6 residues coordinate ATP: R251, R266, E296, F342, R419, and K425.

Belongs to the ATP-dependent DNA ligase family. Mg(2+) serves as cofactor.

It carries out the reaction ATP + (deoxyribonucleotide)n-3'-hydroxyl + 5'-phospho-(deoxyribonucleotide)m = (deoxyribonucleotide)n+m + AMP + diphosphate.. Functionally, DNA ligase that seals nicks in double-stranded DNA during DNA replication, DNA recombination and DNA repair. The chain is DNA ligase 1 from Methanosarcina mazei (strain ATCC BAA-159 / DSM 3647 / Goe1 / Go1 / JCM 11833 / OCM 88) (Methanosarcina frisia).